A 202-amino-acid chain; its full sequence is Protein lin-28 homolog A (202 aa).

2 disordered regions span residues Met-1–His-33 and Ser-100–Gly-128. Over residues Glu-18 to Ser-29 the composition is skewed to acidic residues. The CSD domain maps to His-33–Pro-106. The tract at residues Gly-107–Arg-130 is flexible linker. 2 consecutive CCHC-type zinc fingers follow at residues Asp-129 to Leu-146 and Lys-151 to Ile-168. Cys-131, Cys-134, His-139, Cys-144, Cys-153, Cys-156, His-161, and Cys-166 together coordinate Zn(2+). The segment at Ala-170–Asp-202 is disordered. The segment covering Gln-171–Thr-185 has biased composition (polar residues). Position 174 is a phosphoserine (Ser-174).

Belongs to the lin-28 family. In terms of assembly, monomer.

Its subcellular location is the cytoplasm. It localises to the rough endoplasmic reticulum. It is found in the P-body. The protein localises to the stress granule. The protein resides in the nucleus. Its subcellular location is the nucleolus. RNA-binding protein that inhibits processing of pre-let-7 miRNAs and regulates translation of mRNAs that control developmental timing, pluripotency and metabolism. Seems to recognize a common structural G-quartet (G4) feature in its miRNA and mRNA targets. 'Translational enhancer' that drives specific mRNAs to polysomes and increases the efficiency of protein synthesis. Its association with the translational machinery and target mRNAs results in an increased number of initiation events per molecule of mRNA and, indirectly, in mRNA stabilization. Suppressor of microRNA (miRNA) biogenesis, including that of let-7. Binds specific target miRNA precursors (pre-miRNAs), recognizing an 5'-GGAG-3' motif found in their terminal loop, and recruits uridylyltransferase. This results in the terminal uridylation of target pre-miRNAs. Uridylated pre-miRNAs fail to be processed by Dicer and undergo degradation. Localized to the periendoplasmic reticulum area, binds to a large number of spliced mRNAs and inhibits the translation of mRNAs destined for the ER, reducing the synthesis of transmembrane proteins, ER or Golgi lumen proteins, and secretory proteins. Binds to and enhances the translation of mRNAs for several metabolic enzymes, increasing glycolysis and oxidative phosphorylation. Which, with the let-7 repression may enhance tissue repair in adult tissue. The protein is Protein lin-28 homolog A (lin28a) of Danio rerio (Zebrafish).